Consider the following 365-residue polypeptide: S-adenosylmethionine:tRNA ribosyltransferase-isomerase (365 aa).

The protein belongs to the QueA family. In terms of assembly, monomer.

It localises to the cytoplasm. The catalysed reaction is 7-aminomethyl-7-carbaguanosine(34) in tRNA + S-adenosyl-L-methionine = epoxyqueuosine(34) in tRNA + adenine + L-methionine + 2 H(+). It participates in tRNA modification; tRNA-queuosine biosynthesis. Its function is as follows. Transfers and isomerizes the ribose moiety from AdoMet to the 7-aminomethyl group of 7-deazaguanine (preQ1-tRNA) to give epoxyqueuosine (oQ-tRNA). The polypeptide is S-adenosylmethionine:tRNA ribosyltransferase-isomerase (Rickettsia rickettsii (strain Iowa)).